The following is a 249-amino-acid chain: 3-deoxy-D-manno-octulosonic acid kinase (249 aa).

Asp-175 is an active-site residue.

Belongs to the protein kinase superfamily. KdkA/RfaP family.

The protein resides in the cell inner membrane. The catalysed reaction is an alpha-Kdo-(2-&gt;6)-lipid IVA + ATP = a 4-O-phospho-alpha-Kdo-(2-&gt;6)-lipid IVA + ADP + H(+). The protein operates within bacterial outer membrane biogenesis; LPS core biosynthesis. In terms of biological role, catalyzes the ATP-dependent phosphorylation of the 3-deoxy-D-manno-octulosonic acid (Kdo) residue in Kdo-lipid IV(A) at the 4-OH position. The chain is 3-deoxy-D-manno-octulosonic acid kinase from Xylella fastidiosa (strain M12).